Reading from the N-terminus, the 226-residue chain is ATP synthase F(0) complex subunit a (226 aa).

Transmembrane regions (helical) follow at residues 12–32 (PTMM…ILFP), 68–88 (WALM…LGLL), 97–117 (QLSM…ITGF), 138–158 (IPML…ALAV), 164–184 (ITAG…LMDI), and 189–209 (AFIT…VALI).

Belongs to the ATPase A chain family. Component of the ATP synthase complex composed at least of ATP5F1A/subunit alpha, ATP5F1B/subunit beta, ATP5MC1/subunit c (homooctomer), MT-ATP6/subunit a, MT-ATP8/subunit 8, ATP5ME/subunit e, ATP5MF/subunit f, ATP5MG/subunit g, ATP5MK/subunit k, ATP5MJ/subunit j, ATP5F1C/subunit gamma, ATP5F1D/subunit delta, ATP5F1E/subunit epsilon, ATP5PF/subunit F6, ATP5PB/subunit b, ATP5PD/subunit d, ATP5PO/subunit OSCP. ATP synthase complex consists of a soluble F(1) head domain (subunits alpha(3) and beta(3)) - the catalytic core - and a membrane F(0) domain - the membrane proton channel (subunits c, a, 8, e, f, g, k and j). These two domains are linked by a central stalk (subunits gamma, delta, and epsilon) rotating inside the F1 region and a stationary peripheral stalk (subunits F6, b, d, and OSCP). Interacts with DNAJC30; interaction is direct.

The protein localises to the mitochondrion inner membrane. It carries out the reaction H(+)(in) = H(+)(out). Subunit a, of the mitochondrial membrane ATP synthase complex (F(1)F(0) ATP synthase or Complex V) that produces ATP from ADP in the presence of a proton gradient across the membrane which is generated by electron transport complexes of the respiratory chain. ATP synthase complex consist of a soluble F(1) head domain - the catalytic core - and a membrane F(1) domain - the membrane proton channel. These two domains are linked by a central stalk rotating inside the F(1) region and a stationary peripheral stalk. During catalysis, ATP synthesis in the catalytic domain of F(1) is coupled via a rotary mechanism of the central stalk subunits to proton translocation. With the subunit c (ATP5MC1), forms the proton-conducting channel in the F(0) domain, that contains two crucial half-channels (inlet and outlet) that facilitate proton movement from the mitochondrial intermembrane space (IMS) into the matrix. Protons are taken up via the inlet half-channel and released through the outlet half-channel, following a Grotthuss mechanism. The sequence is that of ATP synthase F(0) complex subunit a from Phoca vitulina (Harbor seal).